Here is a 309-residue protein sequence, read N- to C-terminus: Homoserine kinase (309 aa).

Position 95 to 105 (P95 to A105) interacts with ATP.

The protein belongs to the GHMP kinase family. Homoserine kinase subfamily.

The protein localises to the cytoplasm. It carries out the reaction L-homoserine + ATP = O-phospho-L-homoserine + ADP + H(+). It participates in amino-acid biosynthesis; L-threonine biosynthesis; L-threonine from L-aspartate: step 4/5. Functionally, catalyzes the ATP-dependent phosphorylation of L-homoserine to L-homoserine phosphate. The chain is Homoserine kinase from Corynebacterium efficiens (strain DSM 44549 / YS-314 / AJ 12310 / JCM 11189 / NBRC 100395).